Here is a 349-residue protein sequence, read N- to C-terminus: tRNA (guanine(26)-N(2))-dimethyltransferase (349 aa).

Residues 1 to 343 (MEVEEGRARV…ADRDVVVKIL (343 aa)) form the Trm1 methyltransferase domain. Residues Arg-25, Arg-50, Asp-66, Asp-92, and Ala-93 each coordinate S-adenosyl-L-methionine.

This sequence belongs to the class I-like SAM-binding methyltransferase superfamily. Trm1 family.

It catalyses the reaction guanosine(26) in tRNA + 2 S-adenosyl-L-methionine = N(2)-dimethylguanosine(26) in tRNA + 2 S-adenosyl-L-homocysteine + 2 H(+). In terms of biological role, dimethylates a single guanine residue at position 26 of a number of tRNAs using S-adenosyl-L-methionine as donor of the methyl groups. This chain is tRNA (guanine(26)-N(2))-dimethyltransferase, found in Archaeoglobus fulgidus (strain ATCC 49558 / DSM 4304 / JCM 9628 / NBRC 100126 / VC-16).